A 182-amino-acid chain; its full sequence is MKEKEIQENMNKSIEATQRNFNTIRTGRANASLLDRVSVDYYGAETPIKSLATISTIDSQTISIQPFDISCLQAIEKSISMSDLGITPNNDGKVIRINVPPLTEERRKEFCKLASKYAEEGKVALRNIRRDAVDKEKKDEKDGLISIDESRDNQSEIQKITDKYIALIETKLSEKEKEILKV.

Belongs to the RRF family.

It localises to the cytoplasm. Functionally, responsible for the release of ribosomes from messenger RNA at the termination of protein biosynthesis. May increase the efficiency of translation by recycling ribosomes from one round of translation to another. This is Ribosome-recycling factor from Prochlorococcus marinus (strain MIT 9215).